The primary structure comprises 1568 residues: MEVSRRKAPPRPPRPAAPLPLLAYLLALAAPGRGADEPVWRSEQAIGAIAASQEDGVFVASGSCLDQLDYSLEHSLSRLYRDQAGNCTEPVSLAPPARPRPGSSFSKLLLPYREGAAGLGGLLLTGWTFDRGACEVRPLGNLSRNSLRNGTEVVSCHPQGSTAGVVYRAGRNNRWYLAVAATYVLPEPETASRCNPAASDHDTAIALKDTEGRSLATQELGRLKLCEGAGSLHFVDAFLWNGSIYFPYYPYNYTSGAATGWPSMARIAQSTEVLFQGQASLDCGHGHPDGRRLLLSSSLVEALDVWAGVFSAAAGEGQERRSPTTTALCLFRMSEIQARAKRVSWDFKTAESHCKEGDQPERVQPIASSTLIHSDLTSVYGTVVMNRTVLFLGTGDGQLLKVILGENLTSNCPEVIYEIKEETPVFYKLVPDPVKNIYIYLTAGKEVRRIRVANCNKHKSCSECLTATDPHCGWCHSLQRCTFQGDCVHSENLENWLDISSGAKKCPKIQIIRSSKEKTTVTMVGSFSPRHSKCMVKNVDSSRELCQNKSQPNRTCTCSIPTRATYKDVSVVNVMFSFGSWNLSDRFNFTNCSSLKECPACVETGCAWCKSARRCIHPFTACDPSDYERNQEQCPVAVEKTSGGGRPKENKGNRTNQALQVFYIKSIEPQKVSTLGKSNVIVTGANFTRASNITMILKGTSTCDKDVIQVSHVLNDTHMKFSLPSSRKEMKDVCIQFDGGNCSSVGSLSYIALPHCSLIFPATTWISGGQNITMMGRNFDVIDNLIISHELKGNINVSEYCVATYCGFLAPSLKSSKVRTNVTVKLRVQDTYLDCGTLQYREDPRFTGYRVESEVDTELEVKIQKENDNFNISKKDIEITLFHGENGQLNCSFENITRNQDLTTILCKIKGIKTASTIANSSKKVRVKLGNLELYVEQESVPSTWYFLIVLPVLLVIVIFAAVGVTRHKSKELSRKQSQQLELLESELRKEIRDGFAELQMDKLDVVDSFGTVPFLDYKHFALRTFFPESGGFTHIFTEDMHNRDANDKNESLTALDALICNKSFLVTVIHTLEKQKNFSVKDRCLFASFLTIALQTKLVYLTSILEVLTRDLMEQCSNMQPKLMLRRTESVVEKLLTNWMSVCLSGFLRETVGEPFYLLVTTLNQKINKGPVDVITCKALYTLNEDWLLWQVPEFSTVALNVVFEKIPENESADVCRNISVNVLDCDTIGQAKEKIFQAFLSKNGSPYGLQLNEIGLELQMGTRQKELLDIDSSSVILEDGITKLNTIGHYEISNGSTIKVFKKIANFTSDVEYSDDHCHLILPDSEAFQDVQGKRHRGKHKFKVKEMYLTKLLSTKVAIHSVLEKLFRSIWSLPNSRAPFAIKYFFDFLDAQAENKKITDPDVVHIWKTNSLPLRFWVNILKNPQFVFDIKKTPHIDGCLSVIAQAFMDAFSLTEQQLGKEAPTNKLLYAKDIPTYKEEVKSYYKAIRDLPPLSSSEMEEFLTQESKKHENEFNEEVALTEIYKYIVKYFDEILNKLERERGLEEAQKQLLHVKVLFDEKKKCKWM.

Residues 1–34 (MEVSRRKAPPRPPRPAAPLPLLAYLLALAAPGRG) form the signal peptide. The Sema domain occupies 35–452 (ADEPVWRSEQ…AGKEVRRIRV (418 aa)). At 35-944 (ADEPVWRSEQ…YVEQESVPST (910 aa)) the chain is on the extracellular side. A disulfide bridge connects residues C64 and C87. N-linked (GlcNAc...) asparagine glycosylation is found at N86, N141, and N149. Cystine bridges form between C156–C194, C226–C354, and C283–C329. Residues N241 and N252 are each glycosylated (N-linked (GlcNAc...) asparagine). N386 and N407 each carry an N-linked (GlcNAc...) asparagine glycan. 4 disulfide bridges follow: C455-C472, C461-C506, C464-C481, and C475-C487. Residues N548, N582, N653, N692, N771, N796, N821, N871, and N890 are each glycosylated (N-linked (GlcNAc...) asparagine). The chain crosses the membrane as a helical span at residues 945–965 (WYFLIVLPVLLVIVIFAAVGV). The Cytoplasmic portion of the chain corresponds to 966–1568 (TRHKSKELSR…FDEKKKCKWM (603 aa)). S978 carries the post-translational modification Phosphoserine.

Belongs to the plexin family. Monomer. Homodimer. Interacts with SEMA7A. Post-translationally, N-glycosylated. As to expression, detected in heart, brain, lung, spleen and placenta.

The protein localises to the membrane. Receptor for SEMA7A, for smallpox semaphorin A39R, vaccinia virus semaphorin A39R and for herpesvirus Sema protein. Binding of semaphorins triggers cellular responses leading to the rearrangement of the cytoskeleton and to secretion of IL6 and IL8. The polypeptide is Plexin-C1 (PLXNC1) (Homo sapiens (Human)).